We begin with the raw amino-acid sequence, 344 residues long: DNA-directed RNA polymerase subunit alpha (344 aa).

Residues methionine 1–proline 238 form an alpha N-terminal domain (alpha-NTD) region. An alpha C-terminal domain (alpha-CTD) region spans residues alanine 254–aspartate 344.

It belongs to the RNA polymerase alpha chain family. Homodimer. The RNAP catalytic core consists of 2 alpha, 1 beta, 1 beta' and 1 omega subunit. When a sigma factor is associated with the core the holoenzyme is formed, which can initiate transcription.

It catalyses the reaction RNA(n) + a ribonucleoside 5'-triphosphate = RNA(n+1) + diphosphate. Functionally, DNA-dependent RNA polymerase catalyzes the transcription of DNA into RNA using the four ribonucleoside triphosphates as substrates. This Helicobacter pylori (strain ATCC 700392 / 26695) (Campylobacter pylori) protein is DNA-directed RNA polymerase subunit alpha.